The sequence spans 288 residues: 4-hydroxy-tetrahydrodipicolinate synthase (288 aa).

Residue Thr47 coordinates pyruvate. Tyr136 serves as the catalytic Proton donor/acceptor. The active-site Schiff-base intermediate with substrate is the Lys164. Ile204 serves as a coordination point for pyruvate.

It belongs to the DapA family. As to quaternary structure, homotetramer; dimer of dimers.

It localises to the cytoplasm. It catalyses the reaction L-aspartate 4-semialdehyde + pyruvate = (2S,4S)-4-hydroxy-2,3,4,5-tetrahydrodipicolinate + H2O + H(+). The protein operates within amino-acid biosynthesis; L-lysine biosynthesis via DAP pathway; (S)-tetrahydrodipicolinate from L-aspartate: step 3/4. Its function is as follows. Catalyzes the condensation of (S)-aspartate-beta-semialdehyde [(S)-ASA] and pyruvate to 4-hydroxy-tetrahydrodipicolinate (HTPA). The polypeptide is 4-hydroxy-tetrahydrodipicolinate synthase (Leuconostoc mesenteroides subsp. mesenteroides (strain ATCC 8293 / DSM 20343 / BCRC 11652 / CCM 1803 / JCM 6124 / NCDO 523 / NBRC 100496 / NCIMB 8023 / NCTC 12954 / NRRL B-1118 / 37Y)).